The primary structure comprises 199 residues: Outer-membrane lipoprotein LolB (199 aa).

Positions 1-28 (MSVCPAPRSPVRWLHAFTLCLLLAVLAG) are cleaved as a signal peptide. A lipid anchor (N-palmitoyl cysteine) is attached at Cys-29. Cys-29 carries S-diacylglycerol cysteine lipidation.

Belongs to the LolB family. Monomer.

Its subcellular location is the cell outer membrane. Its function is as follows. Plays a critical role in the incorporation of lipoproteins in the outer membrane after they are released by the LolA protein. The protein is Outer-membrane lipoprotein LolB of Bordetella parapertussis (strain 12822 / ATCC BAA-587 / NCTC 13253).